Consider the following 117-residue polypeptide: NADH-ubiquinone oxidoreductase chain 3 (117 aa).

A run of 3 helical transmembrane segments spans residues 2-22 (ILYV…IYLL), 56-76 (FFIL…LFPV), and 85-105 (SPLI…GLLY).

Belongs to the complex I subunit 3 family.

The protein resides in the mitochondrion membrane. The catalysed reaction is a ubiquinone + NADH + 5 H(+)(in) = a ubiquinol + NAD(+) + 4 H(+)(out). Core subunit of the mitochondrial membrane respiratory chain NADH dehydrogenase (Complex I) that is believed to belong to the minimal assembly required for catalysis. Complex I functions in the transfer of electrons from NADH to the respiratory chain. The immediate electron acceptor for the enzyme is believed to be ubiquinone. The chain is NADH-ubiquinone oxidoreductase chain 3 (ND3) from Albinaria caerulea (Land snail).